The sequence spans 226 residues: EEF1A lysine methyltransferase 1 (226 aa).

Serine 2 is subject to N-acetylserine. Phosphoserine is present on serine 2.

This sequence belongs to the class I-like SAM-binding methyltransferase superfamily. EFM5 family.

The protein resides in the cytoplasm. The catalysed reaction is L-lysyl-[protein] + 3 S-adenosyl-L-methionine = N(6),N(6),N(6)-trimethyl-L-lysyl-[protein] + 3 S-adenosyl-L-homocysteine + 3 H(+). Its function is as follows. Protein-lysine methyltransferase that selectively catalyzes the trimethylation of EEF1A at 'Lys-79'. The protein is EEF1A lysine methyltransferase 1 of Bos taurus (Bovine).